Here is a 233-residue protein sequence, read N- to C-terminus: Orotidine 5'-phosphate decarboxylase (233 aa).

Residues D10, K32, 59 to 68 (DLKFHDIPNT), T119, R180, Q189, G209, and R210 contribute to the substrate site. The active-site Proton donor is K61.

This sequence belongs to the OMP decarboxylase family. Type 1 subfamily. Homodimer.

It catalyses the reaction orotidine 5'-phosphate + H(+) = UMP + CO2. Its pathway is pyrimidine metabolism; UMP biosynthesis via de novo pathway; UMP from orotate: step 2/2. In terms of biological role, catalyzes the decarboxylation of orotidine 5'-monophosphate (OMP) to uridine 5'-monophosphate (UMP). The polypeptide is Orotidine 5'-phosphate decarboxylase (Pasteurella multocida (strain Pm70)).